The sequence spans 1221 residues: MLNGHVVNYGQHRTRRSFSRIKEILPLPNLTDVQTESYKWFLDEGVKEVFDDILPISDTSGRLTLEYVDYKLQEPKYTVDESRKHDATYSAPMHVTLKLTNHETGEIKTQDVFFGDLPLMTKSGSFIVNGAERVIVSQLVRSPGVYYSGEFDKNGRQIFGTTVIPNRGAWLEFETDAKNISYVRVDRTRKLPLSVLVRALGFGSDSEIKEIFGDSDTLDLTLDKDVHKNPADSRVAEALKDIYDRLRPGEPKTTDSSRSLLVSRFFDPRRYDLAAVGRYKVNKKLSLKNRLLGYTLAETLADPGTGEVLAAKGTVVNNEVMDVLKDYLDRDDFKTVTYTPSDEGVIPEPVTVQEIKVFSREIPDREIKLISNGHIAEDVKCITPADIIASVNYFLELQEGVGNIDDIDHLGNRRIRRVGELLQNQMRIGLARMERVVRERMSIQDAATVTPQQLINIRPIVGSIKEFFGSSQLSQFMDQNNPLGELTHKRRMSALGPGGLSRDRAGYEVRDVHYTHYGRLCPIETPEGPNIGLINSMATYAIINKYGFLETPYRRVSWATHKVTDKIDYLTADEEDNYIIAGANTPLNEDGSFVDDVILCRHREDNVEVSPDRIDYIDVIPKQVVSVTSACIPFLENDDSNRALMGANHQRQAVPLINPHGPLVATGMEYRAGHDSGDALLAEADGEVEYVDANEIRVRREDQTLDTYTLEKYRRSNATKNYNQTPNVKRGDKVVDGQVIANGPSMADGELALGQNPVIAFTTWNMYNFEDAIMLSERLVKEDVYTSIHIEDYDSEARDTKLGPEEITREIPNVGEDALKDLDENGIIRIGAEVHDGDILVGKVTPKGITELSAEERLLHAIFGEKAREVRDTSLRVPHGGGGVVQDVQVFTREAGDELAPGVNTLVRVYIVQKRKIQVGDKMSGRHGNKGTVALIAPVEDMPYLPDGTPVDICLNPMGVPSRMNIGQLLEIHLGRAARALGIHVATPVFDGASEDDVWDFVREAGVDSDGKTVLYDGRTGEPFHNRVSVGVMYYLKLTHMVDDKIHARSIGPYSLVTQQPLGGKAQFGGQRFGEMEVWALEAYGAAYTLQEILTYKSDDVVGRVKAYEAIVKGERITKPGVPESFRVLVKELQSLGLDLRVLDSDENEVELRDMDEDSNEHVNIDALSRLAEAQEKKKLAEEEAEIAAEAEAEGSAEGDAAEADADANEAETADDDKASK.

Residues Glu-1176–Lys-1221 are disordered. Over residues Glu-1183–Asp-1215 the composition is skewed to acidic residues.

Belongs to the RNA polymerase beta chain family. As to quaternary structure, the RNAP catalytic core consists of 2 alpha, 1 beta, 1 beta' and 1 omega subunit. When a sigma factor is associated with the core the holoenzyme is formed, which can initiate transcription.

It carries out the reaction RNA(n) + a ribonucleoside 5'-triphosphate = RNA(n+1) + diphosphate. Functionally, DNA-dependent RNA polymerase catalyzes the transcription of DNA into RNA using the four ribonucleoside triphosphates as substrates. This chain is DNA-directed RNA polymerase subunit beta, found in Lactobacillus delbrueckii subsp. bulgaricus (strain ATCC 11842 / DSM 20081 / BCRC 10696 / JCM 1002 / NBRC 13953 / NCIMB 11778 / NCTC 12712 / WDCM 00102 / Lb 14).